Here is a 344-residue protein sequence, read N- to C-terminus: MFSTQTFFFFPTAPFILFVFTASTIFHLHQRLEKMQPTWELEALEPATMETPSRPQPRPQLKGMWTINAIGRLGNQMGEYATLYALAKMNGRAAFIPPQMHSTLAPIFRITLPVLHDATARSVPWQNYHLNDWMEEQYRHIPGEYVRLTGYPCSWTFYHHLRAEILQEFTLHAHVREEAQNFLRGLRVNGSRPSTYVGVHVRRGDYVHVMPNVWKGVVADRRYLEQALDWFRARYSAPIFVVSSNGMAWCRENINASRGDVVFAGNGNEGSPAKDFALLTQCNHTIMTIGTFGIWAAYLAGGETIYLANYTLPDSPFLKIFKPEAAFLPKWIGIPADLSPLLKH.

Residues 1–7 (MFSTQTF) lie on the Cytoplasmic side of the membrane. Residues 8–28 (FFFPTAPFILFVFTASTIFHL) form a helical; Signal-anchor for type II membrane protein membrane-spanning segment. Topologically, residues 29–344 (HQRLEKMQPT…PADLSPLLKH (316 aa)) are lumenal. N-linked (GlcNAc...) asparagine glycans are attached at residues Asn189, Asn255, Asn283, and Asn309.

As to expression, expressed in brain, heart, lung, intestin and kidney.

The protein localises to the golgi apparatus. It localises to the golgi stack membrane. It carries out the reaction a beta-D-galactosyl-(1-&gt;3)-N-acetyl-beta-D-glucosaminyl derivative + GDP-beta-L-fucose = an alpha-L-Fuc-(1-&gt;2)-beta-D-Gal-(1-&gt;3)-beta-D-GlcNAc derivative + GDP + H(+). The enzyme catalyses a beta-D-galactosyl-(1-&gt;4)-N-acetyl-beta-D-glucosaminyl derivative + GDP-beta-L-fucose = an alpha-L-Fuc-(1-&gt;2)-beta-D-Gal-(1-&gt;4)-beta-D-GlcNAc derivative + GDP + H(+). It catalyses the reaction a ganglioside GM1 + GDP-beta-L-fucose = a ganglioside Fuc-GM1 + GDP + H(+). The catalysed reaction is a neolactoside nLc4Cer + GDP-beta-L-fucose = a neolactoside IV(2)-alpha-Fuc-nLc4Cer + GDP + H(+). It carries out the reaction a neolactoside nLc4Cer(d18:1(4E)) + GDP-beta-L-fucose = a neolactoside IV(2)-alpha-Fuc-nLc4Cer(d18:1(4E)) + GDP + H(+). The enzyme catalyses a ganglioside GA1 + GDP-beta-L-fucose = a ganglioside Fuc-GA1 + GDP + H(+). It catalyses the reaction Lc4Cer + GDP-beta-L-fucose = alpha-L-fucosyl-(1-&gt;2)-beta-D-galactosyl-(1-&gt;3)-N-acetyl-beta-D-glucosaminyl-(1-&gt;3)-beta-D-galactosyl-(1-&gt;4)-beta-D-glucosyl-(1&lt;-&gt;1')-ceramide + GDP + H(+). The catalysed reaction is a beta-D-Gal-(1-&gt;3)-beta-D-GlcNAc-(1-&gt;3)-beta-D-Gal-(1-&gt;4)-beta-D-Glc-(1&lt;-&gt;1')-Cer(d18:1(4E)) + GDP-beta-L-fucose = alpha-L-fucosyl-(1-&gt;2)- beta-D-galactosyl-(1-&gt;3)-N-acetyl-beta-D-glucosaminyl-(1-&gt;3)-beta-D-galactosyl-(1-&gt;4)-beta-D-glucosyl-(1&lt;-&gt;1')-N-acylsphing-4-enine + GDP + H(+). It carries out the reaction a ganglioside GD1b + GDP-beta-L-fucose = a ganglioside Fuc-GD1b + GDP + H(+). The enzyme catalyses a ganglioside GM1 (d18:1(4E)) + GDP-beta-L-fucose = a ganglioside Fuc-GM1 (d18:1(4E)) + GDP + H(+). It catalyses the reaction a globoside GalGb4Cer (d18:1(4E)) + GDP-beta-L-fucose = a globoside Globo-H (d18:1(4E)) + GDP + H(+). The catalysed reaction is a lactoside III(4)-a-Fuc-Lc4Cer + GDP-beta-L-fucose = a lactoside IV(2),III(4)-a-[Fuc]2-Lc4Cer + GDP + H(+). It carries out the reaction beta-D-galactosyl-(1-&gt;3)-N-acetyl-D-galactosamine + GDP-beta-L-fucose = alpha-L-fucosyl-(1-&gt;2)-beta-D-galactosyl-(1-&gt;3)-N-acetyl-D-galactosamine + GDP + H(+). The protein operates within protein modification; protein glycosylation. In terms of biological role, catalyzes the transfer of L-fucose, from a guanosine diphosphate-beta-L-fucose, to the terminal galactose on both O- and N-linked glycans chains of cell surface glycoproteins and glycolipids and the resulting epitope regulates several processes such as cell-cell interaction including host-microbe interaction, cell surface expression and cell proliferation. Preferentially fucosylates gangliosides GA1 and GM1 in the antrum, cecum and colon and in the female reproductive organs. Fucosylated host glycoproteins or glycolipids mediate interaction with intestinal microbiota influencing its composition. Creates a soluble precursor oligosaccharide FuC-alpha ((1,2)Galbeta-) called the H antigen which is an essential substrate for the final step in the soluble ABO blood group antigen synthesis pathway. The sequence is that of Galactoside alpha-(1,2)-fucosyltransferase 2 from Bos taurus (Bovine).